Consider the following 354-residue polypeptide: Holliday junction branch migration complex subunit RuvB (354 aa).

The interval 1 to 22 (MTLQTDDFAPAPARRVVSAAPA) is disordered. The large ATPase domain (RuvB-L) stretch occupies residues 5–194 (TDDFAPAPAR…FGIVARLEFY (190 aa)). Positions 9–22 (APAPARRVVSAAPA) are enriched in low complexity. Residues leucine 33, arginine 34, glycine 75, lysine 78, threonine 79, threonine 80, 141-143 (EDY), arginine 184, tyrosine 194, and arginine 231 each bind ATP. Mg(2+) is bound at residue threonine 79. Residues 195–265 (SAQELARIVK…IAERALAMLD (71 aa)) are small ATPAse domain (RuvB-S). The segment at 268–354 (PEGLDVMDRK…GAQAPGLFAV (87 aa)) is head domain (RuvB-H). DNA-binding residues include arginine 323 and arginine 328.

This sequence belongs to the RuvB family. As to quaternary structure, homohexamer. Forms an RuvA(8)-RuvB(12)-Holliday junction (HJ) complex. HJ DNA is sandwiched between 2 RuvA tetramers; dsDNA enters through RuvA and exits via RuvB. An RuvB hexamer assembles on each DNA strand where it exits the tetramer. Each RuvB hexamer is contacted by two RuvA subunits (via domain III) on 2 adjacent RuvB subunits; this complex drives branch migration. In the full resolvosome a probable DNA-RuvA(4)-RuvB(12)-RuvC(2) complex forms which resolves the HJ.

It localises to the cytoplasm. It carries out the reaction ATP + H2O = ADP + phosphate + H(+). The RuvA-RuvB-RuvC complex processes Holliday junction (HJ) DNA during genetic recombination and DNA repair, while the RuvA-RuvB complex plays an important role in the rescue of blocked DNA replication forks via replication fork reversal (RFR). RuvA specifically binds to HJ cruciform DNA, conferring on it an open structure. The RuvB hexamer acts as an ATP-dependent pump, pulling dsDNA into and through the RuvAB complex. RuvB forms 2 homohexamers on either side of HJ DNA bound by 1 or 2 RuvA tetramers; 4 subunits per hexamer contact DNA at a time. Coordinated motions by a converter formed by DNA-disengaged RuvB subunits stimulates ATP hydrolysis and nucleotide exchange. Immobilization of the converter enables RuvB to convert the ATP-contained energy into a lever motion, pulling 2 nucleotides of DNA out of the RuvA tetramer per ATP hydrolyzed, thus driving DNA branch migration. The RuvB motors rotate together with the DNA substrate, which together with the progressing nucleotide cycle form the mechanistic basis for DNA recombination by continuous HJ branch migration. Branch migration allows RuvC to scan DNA until it finds its consensus sequence, where it cleaves and resolves cruciform DNA. The sequence is that of Holliday junction branch migration complex subunit RuvB from Verminephrobacter eiseniae (strain EF01-2).